The following is a 131-amino-acid chain: Global transcriptional regulator Spx (131 aa).

Residues C10 and C13 are joined by a disulfide bond.

Belongs to the ArsC family. Spx subfamily. As to quaternary structure, interacts with the C-terminal domain of the alpha subunit of the RNAP.

The protein localises to the cytoplasm. In terms of biological role, global transcriptional regulator that plays a key role in stress response and exerts either positive or negative regulation of genes. Acts by interacting with the C-terminal domain of the alpha subunit of the RNA polymerase (RNAP). This interaction can enhance binding of RNAP to the promoter region of target genes and stimulate their transcription, or block interaction of RNAP with activator. In Staphylococcus epidermidis (strain ATCC 35984 / DSM 28319 / BCRC 17069 / CCUG 31568 / BM 3577 / RP62A), this protein is Global transcriptional regulator Spx.